We begin with the raw amino-acid sequence, 149 residues long: Protegrin-4 (149 aa).

An N-terminal signal peptide occupies residues 1–29; that stretch reads METQRASLCLGRWSLWLLLLALVVPSASA. The propeptide occupies 30-130; sequence QALSYREAVL…DITCNEVQGV (101 aa). The interval 61 to 80 is disordered; that stretch reads DQPPKADEDPGTPKPVSFTV. 4 disulfide bridges follow: C85–C96, C107–C124, C136–C145, and C138–C143. R148 is subject to Arginine amide.

The protein belongs to the cathelicidin family.

It localises to the secreted. Functionally, microbicidal activity. This Sus scrofa (Pig) protein is Protegrin-4 (NPG4).